The following is a 68-amino-acid chain: Small integral membrane protein 10-like protein 3 (68 aa).

In terms of tissue distribution, expressed specifically in salivary glands (at protein level).

The chain is Small integral membrane protein 10-like protein 3 from Mus musculus (Mouse).